Consider the following 406-residue polypeptide: Succinylornithine transaminase (406 aa).

Position 252 is an N6-(pyridoxal phosphate)lysine (K252).

It belongs to the class-III pyridoxal-phosphate-dependent aminotransferase family. AstC subfamily. Pyridoxal 5'-phosphate is required as a cofactor.

It carries out the reaction N(2)-succinyl-L-ornithine + 2-oxoglutarate = N-succinyl-L-glutamate 5-semialdehyde + L-glutamate. The protein operates within amino-acid degradation; L-arginine degradation via AST pathway; L-glutamate and succinate from L-arginine: step 3/5. Catalyzes the transamination of N(2)-succinylornithine and alpha-ketoglutarate into N(2)-succinylglutamate semialdehyde and glutamate. Can also act as an acetylornithine aminotransferase. In Escherichia coli O7:K1 (strain IAI39 / ExPEC), this protein is Succinylornithine transaminase.